The primary structure comprises 452 residues: tRNA modification GTPase MnmE (452 aa).

Positions 21, 78, and 118 each coordinate (6S)-5-formyl-5,6,7,8-tetrahydrofolate. In terms of domain architecture, TrmE-type G spans 214 to 375 (GMKVVIAGRP…LREHLKQAMG (162 aa)). Position 224 (Asn-224) interacts with K(+). GTP is bound by residues 224-229 (NAGKSS), 243-249 (TDIAGTT), and 268-271 (DTAG). Ser-228 provides a ligand contact to Mg(2+). K(+) contacts are provided by Thr-243, Ile-245, and Thr-248. Thr-249 serves as a coordination point for Mg(2+). Position 452 (Lys-452) interacts with (6S)-5-formyl-5,6,7,8-tetrahydrofolate.

It belongs to the TRAFAC class TrmE-Era-EngA-EngB-Septin-like GTPase superfamily. TrmE GTPase family. As to quaternary structure, homodimer. Heterotetramer of two MnmE and two MnmG subunits. K(+) serves as cofactor.

It localises to the cytoplasm. Exhibits a very high intrinsic GTPase hydrolysis rate. Involved in the addition of a carboxymethylaminomethyl (cmnm) group at the wobble position (U34) of certain tRNAs, forming tRNA-cmnm(5)s(2)U34. In Haemophilus influenzae (strain PittGG), this protein is tRNA modification GTPase MnmE.